The chain runs to 257 residues: 3-deoxy-manno-octulosonate cytidylyltransferase (257 aa).

It belongs to the KdsB family.

The protein localises to the cytoplasm. It catalyses the reaction 3-deoxy-alpha-D-manno-oct-2-ulosonate + CTP = CMP-3-deoxy-beta-D-manno-octulosonate + diphosphate. Its pathway is nucleotide-sugar biosynthesis; CMP-3-deoxy-D-manno-octulosonate biosynthesis; CMP-3-deoxy-D-manno-octulosonate from 3-deoxy-D-manno-octulosonate and CTP: step 1/1. It participates in bacterial outer membrane biogenesis; lipopolysaccharide biosynthesis. Functionally, activates KDO (a required 8-carbon sugar) for incorporation into bacterial lipopolysaccharide in Gram-negative bacteria. This Xylella fastidiosa (strain M23) protein is 3-deoxy-manno-octulosonate cytidylyltransferase.